The sequence spans 152 residues: Snaclec 5 (152 aa).

The N-terminal stretch at Met1–Ala23 is a signal peptide. 3 disulfides stabilise this stretch: Cys27–Cys38, Cys55–Cys148, and Cys123–Cys140. One can recognise a C-type lectin domain in the interval Tyr34 to Lys149.

It belongs to the snaclec family. Heterodimer; disulfide-linked. Expressed by the venom gland.

The protein resides in the secreted. Its function is as follows. Interferes with one step of hemostasis (modulation of platelet aggregation, or coagulation cascade, for example). In Bitis arietans (African puff adder), this protein is Snaclec 5.